A 338-amino-acid chain; its full sequence is Glyceraldehyde-3-phosphate dehydrogenase 2 (338 aa).

Residues R13–I14, D35, and R80 contribute to the NAD(+) site. D-glyceraldehyde 3-phosphate-binding positions include S151–T153, T182, T211–G212, and R234. C152 functions as the Nucleophile in the catalytic mechanism. Position 316 (N316) interacts with NAD(+).

The protein belongs to the glyceraldehyde-3-phosphate dehydrogenase family. Homotetramer.

The protein localises to the cytoplasm. The enzyme catalyses D-glyceraldehyde 3-phosphate + phosphate + NAD(+) = (2R)-3-phospho-glyceroyl phosphate + NADH + H(+). It functions in the pathway carbohydrate degradation; glycolysis; pyruvate from D-glyceraldehyde 3-phosphate: step 1/5. With respect to regulation, inhibited by koningic acid through the interaction of cysteine residues with koningic acid even at very low concentrations. This Trichoderma koningii (Hypocrea koningii) protein is Glyceraldehyde-3-phosphate dehydrogenase 2 (gpd2).